Consider the following 539-residue polypeptide: Eukaryotic translation initiation factor 3 subunit L (539 aa).

Residues 306–514 (TFSDILLYIQ…IHIADTKVSH (209 aa)) form the PCI domain.

The protein belongs to the eIF-3 subunit L family. In terms of assembly, component of the eukaryotic translation initiation factor 3 (eIF-3) complex. The eIF-3 complex interacts with pix.

The protein resides in the cytoplasm. Component of the eukaryotic translation initiation factor 3 (eIF-3) complex, which is involved in protein synthesis of a specialized repertoire of mRNAs and, together with other initiation factors, stimulates binding of mRNA and methionyl-tRNAi to the 40S ribosome. The eIF-3 complex specifically targets and initiates translation of a subset of mRNAs involved in cell proliferation. In Drosophila sechellia (Fruit fly), this protein is Eukaryotic translation initiation factor 3 subunit L.